The following is a 222-amino-acid chain: UPF0502 protein Shewmr4_1554 (222 aa).

Positions S175–R193 are enriched in polar residues. Positions S175–Q194 are disordered.

The protein belongs to the UPF0502 family.

The sequence is that of UPF0502 protein Shewmr4_1554 from Shewanella sp. (strain MR-4).